The following is a 177-amino-acid chain: Large ribosomal subunit protein uL6 (177 aa).

Belongs to the universal ribosomal protein uL6 family. Part of the 50S ribosomal subunit.

Its function is as follows. This protein binds to the 23S rRNA, and is important in its secondary structure. It is located near the subunit interface in the base of the L7/L12 stalk, and near the tRNA binding site of the peptidyltransferase center. This is Large ribosomal subunit protein uL6 from Thioalkalivibrio sulfidiphilus (strain HL-EbGR7).